The sequence spans 350 residues: Probable aldo-keto reductase 1 (350 aa).

The active-site Proton donor is the tyrosine 67. Histidine 135 lines the substrate pocket. Serine 214–glycine 224 provides a ligand contact to NADP(+).

The protein belongs to the aldo/keto reductase family.

This is Probable aldo-keto reductase 1 from Oryza sativa subsp. indica (Rice).